Here is a 531-residue protein sequence, read N- to C-terminus: Probable peptide ABC transporter periplasmic-binding protein y4tO (531 aa).

Positions methionine 1 to alanine 32 form a signal peptide, tat-type signal.

The protein belongs to the bacterial solute-binding protein 5 family. In terms of processing, predicted to be exported by the Tat system. The position of the signal peptide cleavage has not been experimentally proven.

Its subcellular location is the periplasm. Its function is as follows. Probably part of the binding-protein-dependent transport system y4tOPQRS for a peptide. In Sinorhizobium fredii (strain NBRC 101917 / NGR234), this protein is Probable peptide ABC transporter periplasmic-binding protein y4tO.